The following is a 597-amino-acid chain: Elongation factor 4 (597 aa).

One can recognise a tr-type G domain in the interval 2–184 (KHIRNFSIIA…EIVARIPAPV (183 aa)). GTP is bound by residues 14-19 (DHGKST) and 131-134 (NKID).

This sequence belongs to the TRAFAC class translation factor GTPase superfamily. Classic translation factor GTPase family. LepA subfamily.

It is found in the cell inner membrane. The enzyme catalyses GTP + H2O = GDP + phosphate + H(+). In terms of biological role, required for accurate and efficient protein synthesis under certain stress conditions. May act as a fidelity factor of the translation reaction, by catalyzing a one-codon backward translocation of tRNAs on improperly translocated ribosomes. Back-translocation proceeds from a post-translocation (POST) complex to a pre-translocation (PRE) complex, thus giving elongation factor G a second chance to translocate the tRNAs correctly. Binds to ribosomes in a GTP-dependent manner. The sequence is that of Elongation factor 4 from Aeromonas salmonicida (strain A449).